Here is a 100-residue protein sequence, read N- to C-terminus: Large ribosomal subunit protein uL23 (100 aa).

This sequence belongs to the universal ribosomal protein uL23 family. In terms of assembly, part of the 50S ribosomal subunit. Contacts protein L29, and trigger factor when it is bound to the ribosome.

Its function is as follows. One of the early assembly proteins it binds 23S rRNA. One of the proteins that surrounds the polypeptide exit tunnel on the outside of the ribosome. Forms the main docking site for trigger factor binding to the ribosome. The protein is Large ribosomal subunit protein uL23 of Dechloromonas aromatica (strain RCB).